We begin with the raw amino-acid sequence, 294 residues long: Nucleotide-binding protein CLK_2809 (294 aa).

ATP is bound at residue 8–15; that stretch reads GLSGAGKT. Residue 59 to 62 coordinates GTP; sequence DIRG.

Belongs to the RapZ-like family.

In terms of biological role, displays ATPase and GTPase activities. The chain is Nucleotide-binding protein CLK_2809 from Clostridium botulinum (strain Loch Maree / Type A3).